A 239-amino-acid polypeptide reads, in one-letter code: Pyridoxine 5'-phosphate synthase (239 aa).

Asparagine 7 contacts 3-amino-2-oxopropyl phosphate. Position 9–10 (9–10) interacts with 1-deoxy-D-xylulose 5-phosphate; sequence DH. Arginine 18 lines the 3-amino-2-oxopropyl phosphate pocket. Histidine 43 acts as the Proton acceptor in catalysis. Positions 45 and 50 each coordinate 1-deoxy-D-xylulose 5-phosphate. Glutamate 70 functions as the Proton acceptor in the catalytic mechanism. A 1-deoxy-D-xylulose 5-phosphate-binding site is contributed by threonine 100. Histidine 191 (proton donor) is an active-site residue. Residues glycine 192 and 213-214 contribute to the 3-amino-2-oxopropyl phosphate site; that span reads GH.

Belongs to the PNP synthase family. As to quaternary structure, homooctamer; tetramer of dimers.

Its subcellular location is the cytoplasm. It catalyses the reaction 3-amino-2-oxopropyl phosphate + 1-deoxy-D-xylulose 5-phosphate = pyridoxine 5'-phosphate + phosphate + 2 H2O + H(+). It functions in the pathway cofactor biosynthesis; pyridoxine 5'-phosphate biosynthesis; pyridoxine 5'-phosphate from D-erythrose 4-phosphate: step 5/5. In terms of biological role, catalyzes the complicated ring closure reaction between the two acyclic compounds 1-deoxy-D-xylulose-5-phosphate (DXP) and 3-amino-2-oxopropyl phosphate (1-amino-acetone-3-phosphate or AAP) to form pyridoxine 5'-phosphate (PNP) and inorganic phosphate. In Pelobacter propionicus (strain DSM 2379 / NBRC 103807 / OttBd1), this protein is Pyridoxine 5'-phosphate synthase.